Reading from the N-terminus, the 428-residue chain is 3-phosphoshikimate 1-carboxyvinyltransferase (428 aa).

The 3-phosphoshikimate site is built by Lys23, Ser24, and Arg28. Lys23 serves as a coordination point for phosphoenolpyruvate. Gly97 and Arg125 together coordinate phosphoenolpyruvate. Residues Ser170, Ser171, Gln172, Ser198, Asp314, Asn337, and Lys341 each coordinate 3-phosphoshikimate. Gln172 is a phosphoenolpyruvate binding site. The active-site Proton acceptor is the Asp314. Arg345, Arg387, and Lys412 together coordinate phosphoenolpyruvate.

The protein belongs to the EPSP synthase family. As to quaternary structure, monomer.

The protein resides in the cytoplasm. The catalysed reaction is 3-phosphoshikimate + phosphoenolpyruvate = 5-O-(1-carboxyvinyl)-3-phosphoshikimate + phosphate. The protein operates within metabolic intermediate biosynthesis; chorismate biosynthesis; chorismate from D-erythrose 4-phosphate and phosphoenolpyruvate: step 6/7. In terms of biological role, catalyzes the transfer of the enolpyruvyl moiety of phosphoenolpyruvate (PEP) to the 5-hydroxyl of shikimate-3-phosphate (S3P) to produce enolpyruvyl shikimate-3-phosphate and inorganic phosphate. The chain is 3-phosphoshikimate 1-carboxyvinyltransferase from Buchnera aphidicola subsp. Schizaphis graminum (strain Sg).